The sequence spans 795 residues: Protein Jade-3 (795 aa).

Residues 1 to 25 (MKRLRTPSSSDSSDNESPSTSFSSN) show a composition bias toward low complexity. The tract at residues 1–41 (MKRLRTPSSSDSSDNESPSTSFSSNKYGSKPGTPASAQKKP) is disordered. The PHD-type 1 zinc finger occupies 201 to 251 (DVICDVCRSPDSEEGNDMVFCDKCNICVHQACYGIVKVPDGNWLCRTCVLG). The C2HC pre-PHD-type zinc finger occupies 253–287 (TPQCLLCPKTGGAMKATRAGTKWAHVSCALWIPEV). The segment at 311–367 (LICSLCKLKTGACIQCSVKNCTIPFHVTCAFEHSLEMKTILDEGDEVKFKSYCLKHS) adopts a PHD-type 2 zinc-finger fold. Disordered regions lie at residues 630–654 (HGQSSNGKTKNEAEKSRQIKSNGIL), 667–687 (AASEKDPRSEISGKSQSSGFH), and 714–795 (FEKN…SVQR). 2 stretches are compositionally biased toward polar residues: residues 678-687 (SGKSQSSGFH) and 720-732 (KSSGFSKPLSTER).

The protein belongs to the JADE family. As to quaternary structure, component of the HBO1 complex.

Its function is as follows. Scaffold subunit of some HBO1 complexes, which have a histone H4 acetyltransferase activity. The chain is Protein Jade-3 (jade3) from Danio rerio (Zebrafish).